Reading from the N-terminus, the 330-residue chain is Ketol-acid reductoisomerase (NADP(+)) (330 aa).

The KARI N-terminal Rossmann domain maps to 1–181 (MNAYYEQDAD…GGTKAGVIET (181 aa)). NADP(+) is bound by residues 24–27 (FGSQ), R47, S50, S52, and 82–85 (DQYQ). The active site involves H107. An NADP(+)-binding site is contributed by G133. The 146-residue stretch at 182-327 (TFKNETETDL…AKLRDMMSWL (146 aa)) folds into the KARI C-terminal knotted domain. Positions 190, 194, 226, and 230 each coordinate Mg(2+). Substrate is bound at residue S251.

Belongs to the ketol-acid reductoisomerase family. The cofactor is Mg(2+).

The catalysed reaction is (2R)-2,3-dihydroxy-3-methylbutanoate + NADP(+) = (2S)-2-acetolactate + NADPH + H(+). The enzyme catalyses (2R,3R)-2,3-dihydroxy-3-methylpentanoate + NADP(+) = (S)-2-ethyl-2-hydroxy-3-oxobutanoate + NADPH + H(+). It functions in the pathway amino-acid biosynthesis; L-isoleucine biosynthesis; L-isoleucine from 2-oxobutanoate: step 2/4. It participates in amino-acid biosynthesis; L-valine biosynthesis; L-valine from pyruvate: step 2/4. Its function is as follows. Involved in the biosynthesis of branched-chain amino acids (BCAA). Catalyzes an alkyl-migration followed by a ketol-acid reduction of (S)-2-acetolactate (S2AL) to yield (R)-2,3-dihydroxy-isovalerate. In the isomerase reaction, S2AL is rearranged via a Mg-dependent methyl migration to produce 3-hydroxy-3-methyl-2-ketobutyrate (HMKB). In the reductase reaction, this 2-ketoacid undergoes a metal-dependent reduction by NADPH to yield (R)-2,3-dihydroxy-isovalerate. This Chlorobium phaeobacteroides (strain BS1) protein is Ketol-acid reductoisomerase (NADP(+)).